Consider the following 490-residue polypeptide: Probable cytosol aminopeptidase (490 aa).

Positions 262 and 267 each coordinate Mn(2+). Residue lysine 274 is part of the active site. Mn(2+) contacts are provided by aspartate 285, aspartate 344, and glutamate 346. Residue arginine 348 is part of the active site.

Belongs to the peptidase M17 family. Mn(2+) serves as cofactor.

The protein localises to the cytoplasm. It carries out the reaction Release of an N-terminal amino acid, Xaa-|-Yaa-, in which Xaa is preferably Leu, but may be other amino acids including Pro although not Arg or Lys, and Yaa may be Pro. Amino acid amides and methyl esters are also readily hydrolyzed, but rates on arylamides are exceedingly low.. It catalyses the reaction Release of an N-terminal amino acid, preferentially leucine, but not glutamic or aspartic acids.. Its function is as follows. Presumably involved in the processing and regular turnover of intracellular proteins. Catalyzes the removal of unsubstituted N-terminal amino acids from various peptides. This is Probable cytosol aminopeptidase from Xanthomonas axonopodis pv. citri (strain 306).